Consider the following 407-residue polypeptide: NADH-quinone oxidoreductase subunit D (407 aa).

This sequence belongs to the complex I 49 kDa subunit family. NDH-1 is composed of 14 different subunits. Subunits NuoB, C, D, E, F, and G constitute the peripheral sector of the complex.

The protein resides in the cell inner membrane. The catalysed reaction is a quinone + NADH + 5 H(+)(in) = a quinol + NAD(+) + 4 H(+)(out). Functionally, NDH-1 shuttles electrons from NADH, via FMN and iron-sulfur (Fe-S) centers, to quinones in the respiratory chain. The immediate electron acceptor for the enzyme in this species is believed to be ubiquinone. Couples the redox reaction to proton translocation (for every two electrons transferred, four hydrogen ions are translocated across the cytoplasmic membrane), and thus conserves the redox energy in a proton gradient. The sequence is that of NADH-quinone oxidoreductase subunit D from Roseobacter denitrificans (strain ATCC 33942 / OCh 114) (Erythrobacter sp. (strain OCh 114)).